The primary structure comprises 65 residues: TICYNHLTRTSETTEICPDSWYFCYKISLADGNDVRIKRGCTFTCPELRPTGIYVYCCRRDKCNQ.

4 disulfides stabilise this stretch: cysteine 3/cysteine 24, cysteine 17/cysteine 41, cysteine 45/cysteine 57, and cysteine 58/cysteine 63.

In terms of assembly, homodimer; non-covalently linked. As to expression, expressed by the venom gland.

The protein localises to the secreted. Its function is as follows. Antagonist of muscle and neuronal nicotinic acetylcholine receptors (nAChR) with highest affinity for neuronal alpha-7/CHRNA7 nAChRs. This Naja kaouthia (Monocled cobra) protein is Muscarinic toxin-like protein 3.